A 277-amino-acid polypeptide reads, in one-letter code: Large ribosomal subunit protein uL2c (277 aa).

The disordered stretch occupies residues 223–277; the sequence is VVMNPIDHPHGGGEGRAPIGRKKPLTPWGHPALGKRSRKNNKYSDTLILRRRKNS.

Belongs to the universal ribosomal protein uL2 family. As to quaternary structure, part of the 50S ribosomal subunit.

Its subcellular location is the plastid. It localises to the chloroplast. In Marchantia polymorpha (Common liverwort), this protein is Large ribosomal subunit protein uL2c (rpl2).